A 426-amino-acid polypeptide reads, in one-letter code: MGQTITEKIFSEHAGKKVHAGEIVRVDIDMIIGNDITTPISIRAFEESGAEKLARPDNFSIVMDHYIPAKDIASANQAKISREFAYKHDLKYFFDEKDMGIEHALLPEKGLVIPGDVIIGADSHTCTHGALGAFSTGMGSTDLAFGMITGGNWFKVPETIKVVLTGKSGEHIYGKDIILELIRILGVDGALYKALEFTGDAIQHLAMDDRFSMCNMAIEAGAKSGIIAVDNITEAYLIERAEANGGLRSEPKIHYSDEDATYCQVVTIDVENLSPVIAYPFLPSNGKPVEQAVKDDLKIDQVMIGSCTNGRIEDLRIAAEIMKGKRVAKHTRMIVTPATQKILMQAQHEGLMDILIEAGAVVSNPTCGACLGGYMGILGDGERCVATTNRNFVGRMGARTSEIYLANSAVAAASAIAGKIVDPREI.

Residues Cys307, Cys367, and Cys370 each coordinate [4Fe-4S] cluster.

The protein belongs to the aconitase/IPM isomerase family. LeuC type 2 subfamily. As to quaternary structure, heterodimer of LeuC and LeuD. It depends on [4Fe-4S] cluster as a cofactor.

It carries out the reaction (2R,3S)-3-isopropylmalate = (2S)-2-isopropylmalate. Its pathway is amino-acid biosynthesis; L-leucine biosynthesis; L-leucine from 3-methyl-2-oxobutanoate: step 2/4. Catalyzes the isomerization between 2-isopropylmalate and 3-isopropylmalate, via the formation of 2-isopropylmaleate. The sequence is that of 3-isopropylmalate dehydratase large subunit from Sulfurovum sp. (strain NBC37-1).